The following is a 71-amino-acid chain: Sec-independent protein translocase protein TatA (71 aa).

A helical membrane pass occupies residues 1 to 21 (MGSFSIWHWLIVLVIVALIFG). A disordered region spans residues 48–71 (ADKTEQVTQQQTTIDVQAKEKQNS).

It belongs to the TatA/E family. In terms of assembly, the Tat system comprises two distinct complexes: a TatABC complex, containing multiple copies of TatA, TatB and TatC subunits, and a separate TatA complex, containing only TatA subunits. Substrates initially bind to the TatABC complex, which probably triggers association of the separate TatA complex to form the active translocon.

Its subcellular location is the cell inner membrane. Functionally, part of the twin-arginine translocation (Tat) system that transports large folded proteins containing a characteristic twin-arginine motif in their signal peptide across membranes. TatA could form the protein-conducting channel of the Tat system. This chain is Sec-independent protein translocase protein TatA, found in Bordetella avium (strain 197N).